The following is a 358-amino-acid chain: Fructose-bisphosphate aldolase 2, cytoplasmic (358 aa).

Arg-39 lines the substrate pocket. Glu-183 serves as the catalytic Proton acceptor. Lys-225 (schiff-base intermediate with dihydroxyacetone-P) is an active-site residue. Substrate contacts are provided by residues 266-268 (SGG) and Arg-298.

This sequence belongs to the class I fructose-bisphosphate aldolase family. As to quaternary structure, homotetramer.

It is found in the cytoplasm. Its subcellular location is the cytosol. The catalysed reaction is beta-D-fructose 1,6-bisphosphate = D-glyceraldehyde 3-phosphate + dihydroxyacetone phosphate. It functions in the pathway carbohydrate degradation; glycolysis; D-glyceraldehyde 3-phosphate and glycerone phosphate from D-glucose: step 4/4. Its function is as follows. Fructose-bisphosphate aldolase that plays a key role in glycolysis and gluconeogenesis. In Oryza sativa subsp. japonica (Rice), this protein is Fructose-bisphosphate aldolase 2, cytoplasmic.